We begin with the raw amino-acid sequence, 224 residues long: Superoxide dismutase [Mn], mitochondrial (224 aa).

A mitochondrion-targeting transit peptide spans 1-20 (MLLARAFARRSLRAGLWCRQ). 4 residues coordinate Mn(2+): His-46, His-94, Asp-177, and His-181.

This sequence belongs to the iron/manganese superoxide dismutase family. Homotetramer. The cofactor is Mn(2+).

Its subcellular location is the mitochondrion matrix. It catalyses the reaction 2 superoxide + 2 H(+) = H2O2 + O2. In terms of biological role, destroys superoxide anion radicals which are normally produced within the cells and which are toxic to biological systems. The sequence is that of Superoxide dismutase [Mn], mitochondrial from Charybdis feriata (Crucifix crab).